A 1076-amino-acid polypeptide reads, in one-letter code: Inositol-1,4,5-trisphosphate 5-phosphatase 1 (1076 aa).

One can recognise an SAC domain in the interval 144–474 (LRKLLTNGSF…GDALARIYTG (331 aa)). The catalytic stretch occupies residues 534-880 (YDPIHEYVNH…QEVRDASQTS (347 aa)). 2 disordered regions span residues 930–958 (AAPPGPEYRLNPSRPINPFEPTAEPDWIS) and 977–1076 (LSPA…KPLV). Low complexity-rich tracts occupy residues 977–1004 (LSPAPSSLARSSVSSQRSSTSIIPIKPN) and 1025–1040 (SGSSSSGVPAPNLTPV). Positions 1065–1076 (PEESSISWKPLV) are enriched in polar residues.

This sequence belongs to the synaptojanin family. In the central section; belongs to the inositol 1,4,5-trisphosphate 5-phosphatase family. Requires Mg(2+) as cofactor.

It is found in the cytoplasm. The catalysed reaction is a 1,2-diacyl-sn-glycero-3-phospho-(1D-myo-inositol-4,5-bisphosphate) + H2O = a 1,2-diacyl-sn-glycero-3-phospho-(1D-myo-inositol 4-phosphate) + phosphate. In terms of biological role, controls the cellular levels and subcellular distribution of phosphatidylinositol 3-phosphate and phosphatidylinositol 4,5-bisphosphate. Involved in distinct membrane trafficking and signal transduction pathways. Highly active against a range of soluble and lipid inositol phosphates. Active in dephosphorylating the 5-position of Ins(1,4,5)P3 and Ins(1,3,4,5)P4 and to a lesser extent Ins(1,4,5,6)P4. The enzyme is also active against PI(4,5)P2 presented in sonicated vesicles and Triton mixed micelles, and somewhat less active against PI(3,5)P2 in unilamellar vesicles. Activity against PI(3,5)P2 drops sharply when this substrate is presented in mixed micelles. Also hydrolyzes PIP3 to produce PI(3,4)P2. This Schizosaccharomyces pombe (strain 972 / ATCC 24843) (Fission yeast) protein is Inositol-1,4,5-trisphosphate 5-phosphatase 1 (syj1).